Here is a 332-residue protein sequence, read N- to C-terminus: Ferredoxin--NADP reductase 1 (332 aa).

Residues aspartate 35, lysine 43, phenylalanine 48, valine 88, phenylalanine 123, aspartate 284, and threonine 325 each coordinate FAD.

It belongs to the ferredoxin--NADP reductase type 2 family. In terms of assembly, homodimer. Requires FAD as cofactor.

It catalyses the reaction 2 reduced [2Fe-2S]-[ferredoxin] + NADP(+) + H(+) = 2 oxidized [2Fe-2S]-[ferredoxin] + NADPH. This chain is Ferredoxin--NADP reductase 1, found in Listeria monocytogenes serovar 1/2a (strain ATCC BAA-679 / EGD-e).